A 328-amino-acid chain; its full sequence is tRNA uridine(34) hydroxylase (328 aa).

In terms of domain architecture, Rhodanese spans 130–224 (LDEDTVVLDT…YGKDPEVQGE (95 aa)). C184 functions as the Cysteine persulfide intermediate in the catalytic mechanism.

The protein belongs to the TrhO family.

It catalyses the reaction uridine(34) in tRNA + AH2 + O2 = 5-hydroxyuridine(34) in tRNA + A + H2O. Catalyzes oxygen-dependent 5-hydroxyuridine (ho5U) modification at position 34 in tRNAs. The protein is tRNA uridine(34) hydroxylase of Streptococcus agalactiae serotype Ia (strain ATCC 27591 / A909 / CDC SS700).